Here is a 592-residue protein sequence, read N- to C-terminus: Syntaxin-binding protein 3 (592 aa).

Residues 1–255 (MAPPVAERGL…STVLHELTFQ (255 aa)) are mediates interaction with DOC2B.

Belongs to the STXBP/unc-18/SEC1 family. In terms of assembly, interacts with DOC2B; the interaction is direct, occurs at the cell membrane, excludes interaction with STX4 and regulates glucose-stimulated insulin secretion. Interacts with STX4. Phosphorylated by PKC in platelets in response to thrombin stimulation; phosphorylation inhibits binding to STX4. In terms of tissue distribution, megakaryocytes and platelets.

It is found in the cytoplasm. It localises to the cytosol. The protein localises to the cell membrane. Functionally, together with STX4 and VAMP2, may play a role in insulin-dependent movement of GLUT4 and in docking/fusion of intracellular GLUT4-containing vesicles with the cell surface in adipocytes. This Homo sapiens (Human) protein is Syntaxin-binding protein 3 (STXBP3).